The primary structure comprises 334 residues: Catabolite repressor/activator (334 aa).

One can recognise an HTH lacI-type domain in the interval 1-58 (MKLDEIARLAGVSRTTASYVINGKAKQYRVSDKTVEKVMAVVREHNYHPNAVAAGLRA). Positions 3–22 (LDEIARLAGVSRTTASYVIN) form a DNA-binding region, H-T-H motif.

In terms of assembly, homotetramer.

In terms of biological role, global transcriptional regulator, which plays an important role in the regulation of carbon metabolism. The sequence is that of Catabolite repressor/activator (cra) from Salmonella typhimurium (strain LT2 / SGSC1412 / ATCC 700720).